We begin with the raw amino-acid sequence, 123 residues long: Putative iron-sulfur cluster insertion protein ErpA (123 aa).

Cys51, Cys115, and Cys117 together coordinate iron-sulfur cluster.

The protein belongs to the HesB/IscA family. As to quaternary structure, homodimer. Requires iron-sulfur cluster as cofactor.

Functionally, required for insertion of 4Fe-4S clusters. This Burkholderia ambifaria (strain ATCC BAA-244 / DSM 16087 / CCUG 44356 / LMG 19182 / AMMD) (Burkholderia cepacia (strain AMMD)) protein is Putative iron-sulfur cluster insertion protein ErpA.